The following is a 705-amino-acid chain: Polyribonucleotide nucleotidyltransferase (705 aa).

Residues aspartate 487 and aspartate 493 each contribute to the Mg(2+) site. Residues proline 554 to isoleucine 613 form the KH domain. The S1 motif domain maps to glycine 623 to lysine 691.

The protein belongs to the polyribonucleotide nucleotidyltransferase family. Mg(2+) serves as cofactor.

Its subcellular location is the cytoplasm. The catalysed reaction is RNA(n+1) + phosphate = RNA(n) + a ribonucleoside 5'-diphosphate. Its function is as follows. Involved in mRNA degradation. Catalyzes the phosphorolysis of single-stranded polyribonucleotides processively in the 3'- to 5'-direction. In Bacillus pumilus (strain SAFR-032), this protein is Polyribonucleotide nucleotidyltransferase.